The sequence spans 460 residues: A-type ATP synthase subunit B (460 aa).

This sequence belongs to the ATPase alpha/beta chains family. Has multiple subunits with at least A(3), B(3), C, D, E, F, H, I and proteolipid K(x).

It localises to the cell membrane. Functionally, component of the A-type ATP synthase that produces ATP from ADP in the presence of a proton gradient across the membrane. The B chain is a regulatory subunit. The sequence is that of A-type ATP synthase subunit B from Thermoplasma acidophilum (strain ATCC 25905 / DSM 1728 / JCM 9062 / NBRC 15155 / AMRC-C165).